The chain runs to 739 residues: Bifunctional (p)ppGpp synthase/hydrolase RelA (739 aa).

Residues Tyr50–Met149 form the HD domain. 2 residues coordinate Mn(2+): His53 and His77. Residues Glu81 and Asp82 each act as nucleophile, for hydrolase activity in the active site. A Mn(2+)-binding site is contributed by Asp144. Asp264 contacts Mg(2+). Residues Glu393–Thr454 form the TGS domain. In terms of domain architecture, ACT spans Glu664–Gly739.

It belongs to the RelA/SpoT family. Requires Mg(2+) as cofactor. Mn(2+) serves as cofactor.

The catalysed reaction is GTP + ATP = guanosine 3'-diphosphate 5'-triphosphate + AMP. It carries out the reaction guanosine 3',5'-bis(diphosphate) + H2O = GDP + diphosphate + H(+). The protein operates within purine metabolism; ppGpp biosynthesis; ppGpp from GDP: step 1/1. It functions in the pathway purine metabolism; ppGpp biosynthesis; ppGpp from GTP: step 1/2. With respect to regulation, alpha-beta methylenyl ATP, an ATP-analog inhibitor of the synthase activity also reduces the hydrolase activity about 4-fold. In terms of biological role, in eubacteria ppGpp (guanosine 3'-diphosphate 5'-diphosphate) is a mediator of the stringent response that coordinates a variety of cellular activities in response to changes in nutritional abundance. This enzyme catalyzes both the formation of pppGpp which is then hydrolyzed to form ppGpp, and the hydrolysis of ppGpp. The enzyme does not simultaneously display both synthase and hydrolase activities. In the structure of residues 1-385 there are 2 conformations seen, the hydrolase-OFF/synthase-ON and hydrolase-ON/synthase-OFF, suggesting there is ligand-induced signal transmission between the 2 active sites. This chain is Bifunctional (p)ppGpp synthase/hydrolase RelA (relA), found in Streptococcus dysgalactiae subsp. equisimilis (Streptococcus equisimilis).